An 848-amino-acid chain; its full sequence is Adenylate cyclase (848 aa).

A catalytic region spans residues 1–535; the sequence is MYLYIETLKQ…DISHHFPLRL (535 aa). Residues 541-848 form a regulatory region; that stretch reads KALYSPCEIR…SQPAQQFQLH (308 aa).

This sequence belongs to the adenylyl cyclase class-1 family.

The protein resides in the cytoplasm. The catalysed reaction is ATP = 3',5'-cyclic AMP + diphosphate. The regulatory domain is involved in the regulation of cyclase activity by the carbon source. The polypeptide is Adenylate cyclase (cya) (Yersinia intermedia).